The following is a 261-amino-acid chain: Syntaxin-7 (261 aa).

S2 bears the N-acetylserine mark. Over S2 to L238 the chain is Cytoplasmic. T4 carries the phosphothreonine modification. S45 carries the phosphoserine modification. Positions E47–Y69 form a coiled coil. S75 is modified (phosphoserine). Residue T79 is modified to Phosphothreonine. S125, S126, S129, and S205 each carry phosphoserine. The interval S129–Q148 is disordered. Residues L165–A227 enclose the t-SNARE coiled-coil homology domain. A helical; Anchor for type IV membrane protein transmembrane segment spans residues C239–L259. The Vesicular segment spans residues N260–R261.

The protein belongs to the syntaxin family. Forms a SNARE complex with VTI1B, STX8 and VAMP8 which functions in the homotypic fusion of late endosomes. Component of the SNARE complex composed of STX7, STX8, VAMP7 and VTI1B that is required for heterotypic fusion of late endosomes with lysosomes. Interacts with VPS11, VPS16 and VPS18. Interacts with VPS33A. Interacts with TPC1.

It localises to the early endosome membrane. In terms of biological role, may be involved in protein trafficking from the plasma membrane to the early endosome (EE) as well as in homotypic fusion of endocytic organelles. Mediates the endocytic trafficking from early endosomes to late endosomes and lysosomes. This is Syntaxin-7 (STX7) from Pongo abelii (Sumatran orangutan).